The following is a 228-amino-acid chain: UPF0173 metal-dependent hydrolase Lm4b_01588 (228 aa).

Belongs to the UPF0173 family.

The protein is UPF0173 metal-dependent hydrolase Lm4b_01588 of Listeria monocytogenes serotype 4b (strain CLIP80459).